The following is a 268-amino-acid chain: Protein MGF 300-1L (268 aa).

Over 1–175 the chain is Cytoplasmic; it reads MVSLTTCCLK…QTFKTFYAKN (175 aa). The chain crosses the membrane as a helical span at residues 176–193; the sequence is YSLSTLYCIFLAIYYKLY. The Extracellular segment spans residues 194–268; that stretch reads TALRKMVKIY…MYAFSQNDYW (75 aa).

The protein belongs to the asfivirus MGF 300 family.

Its subcellular location is the host membrane. In terms of biological role, plays a role in virus cell tropism, and may be required for efficient virus replication in macrophages. The sequence is that of Protein MGF 300-1L from Ornithodoros (relapsing fever ticks).